Here is a 137-residue protein sequence, read N- to C-terminus: Ribonuclease VapC3 (137 aa).

The PINc domain maps to 12 to 129 (VVVDASAMVD…LTTDERLARA (118 aa)). Mg(2+) is bound by residues Asp-15 and Asp-105.

It belongs to the PINc/VapC protein family. Mg(2+) is required as a cofactor.

Functionally, toxic component of a type II toxin-antitoxin (TA) system. An RNase. Its toxic effect is neutralized by coexpression with cognate antitoxin VapB3. The polypeptide is Ribonuclease VapC3 (Mycobacterium tuberculosis (strain CDC 1551 / Oshkosh)).